The chain runs to 178 residues: 5,6,7,8-tetrahydromethanopterin hydro-lyase (178 aa).

His33 functions as the Proton donor in the catalytic mechanism. The substrate site is built by Asp35, Leu64, Lys82, Thr84, and Gln99.

This sequence belongs to the formaldehyde-activating enzyme family.

Its subcellular location is the cytoplasm. It carries out the reaction 5,6,7,8-tetrahydromethanopterin + formaldehyde = 5,10-methylenetetrahydromethanopterin + H2O. In terms of biological role, catalyzes the condensation of formaldehyde with tetrahydromethanopterin (H(4)MPT) to 5,10-methylenetetrahydromethanopterin. This chain is 5,6,7,8-tetrahydromethanopterin hydro-lyase (faeA), found in Methanosarcina barkeri (strain Fusaro / DSM 804).